Reading from the N-terminus, the 393-residue chain is S-adenosylmethionine synthase 3 (393 aa).

Mg(2+) is bound at residue glutamate 9. Position 15 (histidine 15) interacts with ATP. Position 43 (glutamate 43) interacts with K(+). The L-methionine site is built by glutamate 56 and glutamine 99. ATP contacts are provided by residues 167 to 169 (NGK), 235 to 238 (SGRF), aspartate 246, 252 to 253 (RK), alanine 269, lysine 273, and lysine 277. Aspartate 246 provides a ligand contact to L-methionine. Position 277 (lysine 277) interacts with L-methionine.

Belongs to the AdoMet synthase family. As to quaternary structure, homotetramer. Requires Mn(2+) as cofactor. It depends on Mg(2+) as a cofactor. Co(2+) is required as a cofactor. The cofactor is K(+). Mostly expressed in flowers, seedpods and roots, and, to a lower extent, in stems and leaves.

It is found in the cytoplasm. The enzyme catalyses L-methionine + ATP + H2O = S-adenosyl-L-methionine + phosphate + diphosphate. It participates in amino-acid biosynthesis; S-adenosyl-L-methionine biosynthesis; S-adenosyl-L-methionine from L-methionine: step 1/1. Functionally, catalyzes the formation of S-adenosylmethionine from methionine and ATP. The reaction comprises two steps that are both catalyzed by the same enzyme: formation of S-adenosylmethionine (AdoMet) and triphosphate, and subsequent hydrolysis of the triphosphate. The protein is S-adenosylmethionine synthase 3 (MSAMS3) of Brassica juncea (Indian mustard).